Consider the following 122-residue polypeptide: UPF0102 protein VCM66_0538 (122 aa).

This sequence belongs to the UPF0102 family.

The chain is UPF0102 protein VCM66_0538 from Vibrio cholerae serotype O1 (strain M66-2).